A 370-amino-acid polypeptide reads, in one-letter code: GMP synthase [glutamine-hydrolyzing] subunit B (370 aa).

The GMPS ATP-PPase domain occupies 3–189 (FDPQKFVDEI…LGLPRDIYNR (187 aa)). Residue 29-35 (SGGVDST) coordinates ATP.

In terms of assembly, heterodimer composed of a glutamine amidotransferase subunit (A) and a GMP-binding subunit (B).

It catalyses the reaction XMP + L-glutamine + ATP + H2O = GMP + L-glutamate + AMP + diphosphate + 2 H(+). Its pathway is purine metabolism; GMP biosynthesis; GMP from XMP (L-Gln route): step 1/1. Its function is as follows. Catalyzes the synthesis of GMP from XMP. The sequence is that of GMP synthase [glutamine-hydrolyzing] subunit B (guaAB) from Sulfurisphaera tokodaii (strain DSM 16993 / JCM 10545 / NBRC 100140 / 7) (Sulfolobus tokodaii).